The following is an 82-amino-acid chain: Large ribosomal subunit protein bL31B (82 aa).

This sequence belongs to the bacterial ribosomal protein bL31 family. Type B subfamily. In terms of assembly, part of the 50S ribosomal subunit.

The polypeptide is Large ribosomal subunit protein bL31B (Bacillus velezensis (strain DSM 23117 / BGSC 10A6 / LMG 26770 / FZB42) (Bacillus amyloliquefaciens subsp. plantarum)).